Reading from the N-terminus, the 137-residue chain is Chaperone protein YscB (137 aa).

As to quaternary structure, interacts with SycN to form a complex which specifically binds to YopN.

The protein resides in the cytoplasm. The protein localises to the cell inner membrane. Its function is as follows. Functions as a specific chaperone for YopN. It could facilitate the secretion and the subsequent translocation of YopN. In Yersinia pestis, this protein is Chaperone protein YscB (yscB).